Reading from the N-terminus, the 93-residue chain is Parbolysin P2 (93 aa).

2 disulfide bridges follow: Cys16–Cys37 and Cys22–Cys33.

Belongs to the worm cytolysin family. Localized within the skin and proboscis and are most readily isolated from body mucus secretions.

It localises to the secreted. Cytolysin that shows hemolytic activity (on bovine erythrocytes, HC(50)=5.75 mg/ml). This hemolytic activity is completely inhibited by small unilamelar vesicles composed of PC/PG, PC/PI and PC/PS in 1:1 molar ratios (with at least 100 mg/ml concentration). The polypeptide is Parbolysin P2 (Parborlasia corrugatus (Antarctic nemertean worm)).